The sequence spans 231 residues: Ribosome maturation factor RimM (231 aa).

Residues 1–29 (MSERDSGSSGRAKAKRQPGAKAPFGPFVR) are disordered. The PRC barrel domain occupies 150–231 (TDEYYWVDLV…KIIVDWEADY (82 aa)).

The protein belongs to the RimM family. As to quaternary structure, binds ribosomal protein uS19.

It is found in the cytoplasm. An accessory protein needed during the final step in the assembly of 30S ribosomal subunit, possibly for assembly of the head region. Essential for efficient processing of 16S rRNA. May be needed both before and after RbfA during the maturation of 16S rRNA. It has affinity for free ribosomal 30S subunits but not for 70S ribosomes. The polypeptide is Ribosome maturation factor RimM (Paraburkholderia phymatum (strain DSM 17167 / CIP 108236 / LMG 21445 / STM815) (Burkholderia phymatum)).